Reading from the N-terminus, the 320-residue chain is Aspartate carbamoyltransferase catalytic subunit (320 aa).

Carbamoyl phosphate-binding residues include Arg-68 and Thr-69. Lys-96 lines the L-aspartate pocket. Residues Arg-118, His-148, and Gln-151 each contribute to the carbamoyl phosphate site. Residues Arg-181 and Arg-236 each contribute to the L-aspartate site. Carbamoyl phosphate contacts are provided by Gly-277 and Pro-278.

The protein belongs to the aspartate/ornithine carbamoyltransferase superfamily. ATCase family. In terms of assembly, heterododecamer (2C3:3R2) of six catalytic PyrB chains organized as two trimers (C3), and six regulatory PyrI chains organized as three dimers (R2).

The enzyme catalyses carbamoyl phosphate + L-aspartate = N-carbamoyl-L-aspartate + phosphate + H(+). The protein operates within pyrimidine metabolism; UMP biosynthesis via de novo pathway; (S)-dihydroorotate from bicarbonate: step 2/3. Functionally, catalyzes the condensation of carbamoyl phosphate and aspartate to form carbamoyl aspartate and inorganic phosphate, the committed step in the de novo pyrimidine nucleotide biosynthesis pathway. This Methylibium petroleiphilum (strain ATCC BAA-1232 / LMG 22953 / PM1) protein is Aspartate carbamoyltransferase catalytic subunit.